Consider the following 233-residue polypeptide: U2 small nuclear ribonucleoprotein A' (233 aa).

LRR repeat units follow at residues 20–40 (KLTL…AITQ), 42–63 (KYQV…PKRF), 65–86 (NLQC…SFPS), and 89–110 (HITS…FKDK). One can recognise an LRRCT domain in the interval 122–160 (NPITEMENYRYFIIWLIPSLKVLDFKKVKQAERKTSEDM).

It belongs to the U2 small nuclear ribonucleoprotein A family. Associated with the spliceosome.

The protein resides in the nucleus. Functionally, involved in pre-mRNA splicing. The chain is U2 small nuclear ribonucleoprotein A' (LEA1) from Candida albicans (strain SC5314 / ATCC MYA-2876) (Yeast).